Consider the following 363-residue polypeptide: MGNGTWEGCHVDSRVDHLFPPSLYIFVIGVGLPTNCLALWAAYRQVRQRNELGVYLMNLSIADLLYICTLPLWVDYFLHHDNWIHGPGSCKLFGFIFYTNIYISIAFLCCISVDRYLAVAHPLRFARLRRVKTAVAVSSVVWATELGANSVPLFHDELFRDRYNHTFCFEKFPMEGWVAWMNLYRVFVGFLFPWALMLLSYRGILRAVRGSVSTERQEKAKIKRLALSLIAIVLVCFAPYHVLLLSRSAVYLGHPWDCGFEERVFSAYHSSLAFTSLNCVADPILYCLVNEGARSDVAKALHNLLRFLTSDKPQEMASASLTLDTPLTSKRNSMARAVAAGWVASPPSQGDQVQLKMLPPPAP.

The Extracellular portion of the chain corresponds to 1 to 8 (MGNGTWEG). An N-linked (GlcNAc...) asparagine glycan is attached at asparagine 3. Residues 9 to 45 (CHVDSRVDHLFPPSLYIFVIGVGLPTNCLALWAAYRQ) form a helical membrane-spanning segment. Disulfide bonds link cysteine 9/cysteine 258 and cysteine 90/cysteine 168. Residues 46–49 (VRQR) lie on the Cytoplasmic side of the membrane. A helical transmembrane segment spans residues 50-80 (NELGVYLMNLSIADLLYICTLPLWVDYFLHH). The Extracellular portion of the chain corresponds to 81 to 85 (DNWIH). A helical membrane pass occupies residues 86–121 (GPGSCKLFGFIFYTNIYISIAFLCCISVDRYLAVAH). The Cytoplasmic segment spans residues 122–129 (PLRFARLR). The chain crosses the membrane as a helical span at residues 130 to 156 (RVKTAVAVSSVVWATELGANSVPLFHD). Over 157–172 (ELFRDRYNHTFCFEKF) the chain is Extracellular. The segment at 157–172 (ELFRDRYNHTFCFEKF) is extracellular loop 2 (ECL2). Asparagine 164 carries N-linked (GlcNAc...) asparagine glycosylation. The chain crosses the membrane as a helical span at residues 173-210 (PMEGWVAWMNLYRVFVGFLFPWALMLLSYRGILRAVRG). Residues 211 to 214 (SVST) are Cytoplasmic-facing. The helical transmembrane segment at 215 to 250 (ERQEKAKIKRLALSLIAIVLVCFAPYHVLLLSRSAV) threads the bilayer. At 251 to 260 (YLGHPWDCGF) the chain is on the extracellular side. The helical transmembrane segment at 261-289 (EERVFSAYHSSLAFTSLNCVADPILYCLV) threads the bilayer. The Cytoplasmic portion of the chain corresponds to 290–363 (NEGARSDVAK…QLKMLPPPAP (74 aa)). The interval 344-363 (ASPPSQGDQVQLKMLPPPAP) is disordered.

The protein belongs to the G-protein coupled receptor 1 family.

The protein localises to the cell membrane. Activated by a network of residues that connects an extracellular-facing cavity to Glu-145, a conserved charged residue buried in the transmembrane core of the receptor. Protonation likely drives conformational changes in extracellular loop 2 (ECL2), which stabilizes movement of transmembrane 3 (TM3) and a series of rearrangements that connect the extracellular-facing cavity to Glu-145, a residue only conserved in proton-sensing G-protein coupled receptors. Proton-sensing G-protein coupled receptor activated by extracellular pH, which is required to monitor pH changes and generate adaptive reactions. Activated by an optimal pH of 6.8-7.2. Ligand binding causes a conformation change that triggers signaling via guanine nucleotide-binding proteins (G proteins) and modulates the activity of downstream effectors, such as adenylate cyclase. GPR4 is mainly coupled to G(s) G proteins and mediates activation of adenylate cyclase activity. May also couple with G(q) and G(12)/G(13) G proteins. Acts as a key regulator of respiratory sensitivity to CO2/H(+) in brain retrotrapezoid nucleus neurons: acts by mediating detection of protons generated by the formation of carbonic acid in the blood, an important mechanism to impulse to breathe. Also acts as a regulator of acid secretion in the kidney collecting duct by maintaining acid-base homeostasis in the kidney. Acidosis-induced GPR4 activation increases paracellular gap formation and permeability of vascular endothelial cells, possibly through the G(12)/G(13)/Rho GTPase signaling pathway. This Sus scrofa (Pig) protein is G-protein coupled receptor 4 (GPR4).